The chain runs to 530 residues: Tryptophan 7-halogenase RebH (530 aa).

The FAD site is built by Gly-13, Thr-15, Ala-16, Ala-39, Asp-41, Glu-49, and Ala-50. Lys-79 is a catalytic residue. Positions 197 and 348 each coordinate FAD. Glu-357 serves as a coordination point for L-tryptophan. Thr-359 and Gly-360 together coordinate chloride. FAD is bound at residue Ile-361. Positions 454, 455, 461, and 465 each coordinate L-tryptophan.

It belongs to the flavin-dependent halogenase family. Bacterial tryptophan halogenase subfamily. Homodimer.

It catalyses the reaction L-tryptophan + FADH2 + chloride + O2 = 7-chloro-L-tryptophan + FAD + 2 H2O. Functionally, involved in the biosynthesis of the indolocarbazole antitumor agent rebeccamycin. Catalyzes the chlorination of tryptophan (Trp) at C7 position to yield 7-chlorotryptophan. It is also able to use bromide ions to generate monobrominated Trp. The chain is Tryptophan 7-halogenase RebH (rebH) from Lentzea aerocolonigenes (Lechevalieria aerocolonigenes).